The primary structure comprises 54 residues: Large ribosomal subunit protein bL32c (54 aa).

The protein belongs to the bacterial ribosomal protein bL32 family.

Its subcellular location is the plastid. The protein resides in the chloroplast. The polypeptide is Large ribosomal subunit protein bL32c (Panax ginseng (Korean ginseng)).